The primary structure comprises 317 residues: L-lactate dehydrogenase 1 (317 aa).

Residues V17, D38, K43, Y69, and 83-84 (GA) contribute to the NAD(+) site. Q86 and R92 together coordinate substrate. NAD(+)-binding positions include S105, 122–124 (ATN), and S147. 124 to 127 (NPVD) contacts substrate. Residue 152–155 (DSAR) participates in substrate binding. Catalysis depends on H179, which acts as the Proton acceptor. Residue Y223 is modified to Phosphotyrosine. Residue T232 participates in substrate binding.

It belongs to the LDH/MDH superfamily. LDH family. In terms of assembly, homotetramer.

The protein resides in the cytoplasm. The catalysed reaction is (S)-lactate + NAD(+) = pyruvate + NADH + H(+). Its pathway is fermentation; pyruvate fermentation to lactate; (S)-lactate from pyruvate: step 1/1. Its function is as follows. Catalyzes the conversion of lactate to pyruvate (Potential). Appears to be the primary factor that allows S.aureus growth during nitrosative stress in both aerobically and anaerobically cultured cells. The sequence is that of L-lactate dehydrogenase 1 from Staphylococcus aureus (strain JH1).